The following is a 568-amino-acid chain: Nitrite reductase (568 aa).

The signal sequence occupies residues 1-25; sequence MPFGKPLVGTLLASLTLLGLATAHA. Residues 26 to 54 are N-terminal tail; it reads KDDMKAAEQYQGAASAVDPAHVVRTNGAP. The region spanning 55–140 is the Cytochrome c domain; it reads DMSESEFNEA…AKYIQHTPPQ (86 aa). 6 residues coordinate heme c: Cys-72, Cys-75, His-76, Arg-96, Thr-109, and Met-113. The interval 141–568 is D1-heme domain; that stretch reads PPEWGMPEMR…NVYNTQHDVY (428 aa). Heme d1-binding residues include His-207, Arg-250, Ser-251, Tyr-270, Arg-397, and Gln-508.

As to quaternary structure, homodimer. Heme c is required as a cofactor. It depends on heme as a cofactor.

The protein resides in the periplasm. The catalysed reaction is nitric oxide + Fe(III)-[cytochrome c] + H2O = Fe(II)-[cytochrome c] + nitrite + 2 H(+). The enzyme catalyses A + NH4(+) + H2O = hydroxylamine + AH2 + H(+). The chain is Nitrite reductase (nirS) from Pseudomonas aeruginosa (strain ATCC 15692 / DSM 22644 / CIP 104116 / JCM 14847 / LMG 12228 / 1C / PRS 101 / PAO1).